We begin with the raw amino-acid sequence, 81 residues long: Toxin F-VIII (81 aa).

Positions 1–21 (MKTLLLTLLVVTIVCLDLAST) are cleaved as a signal peptide. 4 cysteine pairs are disulfide-bonded: cysteine 24–cysteine 43, cysteine 38–cysteine 60, cysteine 62–cysteine 73, and cysteine 74–cysteine 79.

The protein belongs to the three-finger toxin family. Short-chain subfamily. Orphan group XI sub-subfamily. As to expression, expressed by the venom gland.

It localises to the secreted. Functionally, is cytotoxic against A549 cells (LC(50)=106 ug/ml). The polypeptide is Toxin F-VIII (Dendroaspis angusticeps (Eastern green mamba)).